Reading from the N-terminus, the 479-residue chain is UPF0164 protein TP_0865 (479 aa).

The signal sequence occupies residues 1–49 (MVRMRRRRACSSGGACGCAAVRGARSFLSVRVLGMRIGMSALCLAPLFA).

The protein belongs to the UPF0164 family.

This chain is UPF0164 protein TP_0865, found in Treponema pallidum (strain Nichols).